Consider the following 309-residue polypeptide: MPIRVPDELPAVNFLREENVFVMTTSRASGQEIRPLKVLILNLMPKKIETENQFLRLLSNSPLQVDIQLLRIDSRESRNTPAEHLNNFYCNFEDIQDQNFDGLIVTGAPLGLVEFNDVAYWPQIKQVLEWSKDHVTSTLFVCWAVQAALNILYGIPKQTRTDKLSGVYEHHILHPHALLTRGFDDSFLAPHSRYADFPAALIRDYTDLEILAETEEGDAYLFASKDKRIAFVTGHPEYDAQTLAQEFFRDVEAGLDPDVPYNYFPHNDPQNTPRASWRSHGNLLFTNWLNYYVYQITPYDLRHMNPTLD.

The active-site Acyl-thioester intermediate is the C142. Substrate-binding residues include K163 and S192. The active-site Proton acceptor is the H235. Residue E237 is part of the active site. R249 contacts substrate.

Belongs to the MetA family. As to quaternary structure, homodimer.

The protein localises to the cytoplasm. It carries out the reaction L-homoserine + succinyl-CoA = O-succinyl-L-homoserine + CoA. It functions in the pathway amino-acid biosynthesis; L-methionine biosynthesis via de novo pathway; O-succinyl-L-homoserine from L-homoserine: step 1/1. Its function is as follows. Transfers a succinyl group from succinyl-CoA to L-homoserine, forming succinyl-L-homoserine. This Escherichia coli (strain ATCC 8739 / DSM 1576 / NBRC 3972 / NCIMB 8545 / WDCM 00012 / Crooks) protein is Homoserine O-succinyltransferase.